The following is a 516-amino-acid chain: MNVFFMFSLLFLAALGSCADDRNPLGECFRETDYEEFLEIAKNGLRATSNPKHVVIVGAGMSGLSAAYVLAEAGHQVTVLEASERAGGRVRTYRNDKEGWYANLGPMRLPEKHRIVREYIRKFGLQLNEFHQENDNAWHFIKNIRKRVGEVKEDPGLLQYPVKPSEEGKSAGQLYEESLGKVAEELKRTNCSYILNKYDTYSTKEYLLKEGNLSPGAVDMIGDLLNEDSGYYVSFIESLKHDDIFGYEKRFDEIVDGMDKLPTSMYQAIKEKVRFNARVIKIQQNDREVTVTYQTSANEMSPVTADYVIVCTTSRATRRITFEPPLPPKKAHALRSVHYRSGTKIFLTCTKKFWEDDGIRGGKSTTDLPSRFIYYPNHNFTSGVGVIIAYGIGDDANFFQALDFKDCGDIVINDLSLIHQLPKKDIQTFCYPSMIQRWSLDKYAMGGITTFTPYQFQHFSEALTAPFKRIYFAGEYTAQFHGWIDSTIKSGLTAARDVNRASENPSGIHLSNDNEL.

An N-terminal signal peptide occupies residues 1-18; the sequence is MNVFFMFSLLFLAALGSC. Cys28 and Cys191 are oxidised to a cystine. FAD contacts are provided by residues 61-62, 81-82, Arg89, and 105-108; these read MS, EA, and GPMR. Arg108 contributes to the substrate binding site. A glycan (N-linked (GlcNAc...) asparagine) is linked at Asn190. His241 contacts substrate. Residue Val279 participates in FAD binding. Cys349 and Cys430 are disulfide-bonded. An N-linked (GlcNAc...) asparagine glycan is attached at Asn379. Substrate is bound at residue Tyr390. FAD-binding positions include Glu475 and 482 to 487; that span reads GWIDST. 482 to 483 contributes to the substrate binding site; it reads GW.

This sequence belongs to the flavin monoamine oxidase family. FIG1 subfamily. Homodimer; non-covalently linked. FAD is required as a cofactor. Expressed by the venom gland.

Its subcellular location is the secreted. It carries out the reaction an L-alpha-amino acid + O2 + H2O = a 2-oxocarboxylate + H2O2 + NH4(+). The catalysed reaction is L-leucine + O2 + H2O = 4-methyl-2-oxopentanoate + H2O2 + NH4(+). The enzyme catalyses L-phenylalanine + O2 + H2O = 3-phenylpyruvate + H2O2 + NH4(+). It catalyses the reaction L-tryptophan + O2 + H2O = indole-3-pyruvate + H2O2 + NH4(+). It carries out the reaction L-methionine + O2 + H2O = 4-methylsulfanyl-2-oxobutanoate + H2O2 + NH4(+). The catalysed reaction is L-isoleucine + O2 + H2O = (S)-3-methyl-2-oxopentanoate + H2O2 + NH4(+). The enzyme catalyses L-tyrosine + O2 + H2O = 3-(4-hydroxyphenyl)pyruvate + H2O2 + NH4(+). In terms of biological role, catalyzes an oxidative deamination of predominantly hydrophobic and aromatic L-amino acids, thus producing hydrogen peroxide that may contribute to the diverse toxic effects of this enzyme. Is highly active on L-Met=L-Leu&gt;&gt;L-Phe&gt;L-Trp&gt;L-Tyr&gt;L-Ile, and weakly or not active on L-His, L-Arg, L-Val, L-Gln, L-Thr, L-Lys, and L-Ser. Exhibits a low myotoxicity (a mild myonecrosis is observed after injection in mice quadriceps muscle). In vitro, is cytotoxic to a lot of human cell lines, including AGS (IC(50)=22.7 ug/ml), MCF-7 (IC(50)=1.4 ug/ml), HL-60, HeLa and Jurkat cells, as well as to the parasite Leishmania brasiliensis (IC(50)=2.22 ug/ml). This cytotoxicity is dependent on the production of hydrogen peroxyde, since it is inhibited by catalase, a hydrogen peroxyde scavenger. The chain is L-amino acid oxidase Lm29 from Lachesis muta (South American bushmaster).